The primary structure comprises 32 residues: NTATCSMHRLADFLGRSSNNFGAILSPTNVGS.

Belongs to the calcitonin family. In terms of assembly, can form homodimers. Interacts with IDE and INS. Interaction with INS inhibits homodimerization and fibril formation.

It is found in the secreted. Its function is as follows. Amylin/IAPP is a glucoregulatory peptide hormone that plays an important role in the regulation of energy homeostasis. Selectively inhibits insulin-stimulated glucose utilization and glycogen deposition in muscle, while not affecting adipocyte glucose metabolism. IAPP function is mediated by the CALCR-RAMPs (AMYRs) receptor complexes. Amylin can also bind CALCR receptor in the absence of RAMPs, although it is more selective for AMYRs. The chain is Islet amyloid polypeptide (IAPP) from Saguinus oedipus (Cotton-top tamarin).